We begin with the raw amino-acid sequence, 166 residues long: MAFVTTAEVCDANQELIRSGQLRALQPIFQIYGRRQIFSGPVVTVKVFEDNGLIRQFIEEKGNGRVLVVDGGGSQRCAILGGNPVVQAQNNGWAGIVVNGCIRDVDEINGCDIGVRALASHPIKASKKGLGEQRVPVNIAGTRICDGEWLYADTDGILVSQIELSV.

Residue Ala2 is modified to N-acetylalanine. Substrate-binding positions include Gly81 to Pro84 and Arg103. Asp104 is an a divalent metal cation binding site.

The protein belongs to the class II aldolase/RraA-like family. Homotrimer. The cofactor is a divalent metal cation.

The enzyme catalyses 4-hydroxy-4-methyl-2-oxoglutarate = 2 pyruvate. It carries out the reaction oxaloacetate + H(+) = pyruvate + CO2. Its function is as follows. Catalyzes the aldol cleavage of 4-hydroxy-4-methyl-2-oxoglutarate (HMG) into 2 molecules of pyruvate. Also contains a secondary oxaloacetate (OAA) decarboxylase activity due to the common pyruvate enolate transition state formed following C-C bond cleavage in the retro-aldol and decarboxylation reactions. The sequence is that of Putative 4-hydroxy-4-methyl-2-oxoglutarate aldolase 2 from Arabidopsis thaliana (Mouse-ear cress).